A 692-amino-acid polypeptide reads, in one-letter code: Protein arginine N-methyltransferase 7 (692 aa).

SAM-dependent MTase PRMT-type domains are found at residues 14–345 (SLEW…YCVW) and 358–684 (SAYQ…ITME). Omega-N-methylarginine is present on R32. Active-site residues include E144 and E153.

Belongs to the class I-like SAM-binding methyltransferase superfamily. Protein arginine N-methyltransferase family. PRMT7 subfamily. As to quaternary structure, homodimer and heterodimer. Interacts with PRMT5 and SNRPD3. Interacts with CTCFL.

The protein localises to the cytoplasm. It localises to the cytosol. Its subcellular location is the nucleus. The catalysed reaction is L-arginyl-[protein] + S-adenosyl-L-methionine = N(omega)-methyl-L-arginyl-[protein] + S-adenosyl-L-homocysteine + H(+). Its function is as follows. Arginine methyltransferase that can both catalyze the formation of omega-N monomethylarginine (MMA) and symmetrical dimethylarginine (sDMA), with a preference for the formation of MMA. Specifically mediates the symmetrical dimethylation of arginine residues in the small nuclear ribonucleoproteins Sm D1 (SNRPD1) and Sm D3 (SNRPD3); such methylation being required for the assembly and biogenesis of snRNP core particles. Specifically mediates the symmetric dimethylation of histone H4 'Arg-3' to form H4R3me2s. Plays a role in gene imprinting by being recruited by CTCFL at the H19 imprinted control region (ICR) and methylating histone H4 to form H4R3me2s, possibly leading to recruit DNA methyltransferases at these sites. May also play a role in embryonic stem cell (ESC) pluripotency. Also able to mediate the arginine methylation of histone H2A and myelin basic protein (MBP) in vitro; the relevance of such results is however unclear in vivo. This Mus musculus (Mouse) protein is Protein arginine N-methyltransferase 7 (Prmt7).